The chain runs to 1383 residues: DNA-directed RNA polymerase subunit beta (1383 aa).

The protein belongs to the RNA polymerase beta chain family. The RNAP catalytic core consists of 2 alpha, 1 beta, 1 beta' and 1 omega subunit. When a sigma factor is associated with the core the holoenzyme is formed, which can initiate transcription.

The catalysed reaction is RNA(n) + a ribonucleoside 5'-triphosphate = RNA(n+1) + diphosphate. Functionally, DNA-dependent RNA polymerase catalyzes the transcription of DNA into RNA using the four ribonucleoside triphosphates as substrates. The polypeptide is DNA-directed RNA polymerase subunit beta (Bartonella henselae (strain ATCC 49882 / DSM 28221 / CCUG 30454 / Houston 1) (Rochalimaea henselae)).